The sequence spans 290 residues: Signal peptidase I (290 aa).

Over Met1 to Ser13 the chain is Cytoplasmic. A helical membrane pass occupies residues Trp14–Ile34. The Extracellular segment spans residues Pro35–His290. Residues Ser38 and Lys106 contribute to the active site.

Belongs to the peptidase S26 family.

The protein resides in the cell membrane. It carries out the reaction Cleavage of hydrophobic, N-terminal signal or leader sequences from secreted and periplasmic proteins.. The sequence is that of Signal peptidase I (lepB) from Helicobacter pylori (strain ATCC 700392 / 26695) (Campylobacter pylori).